Consider the following 131-residue polypeptide: Small ribosomal subunit protein bS6 (131 aa).

The tract at residues 96 to 131 (VTEASPMAKAKDERDSRRGPAGDRSYDEANAEEIAE) is disordered. Basic and acidic residues predominate over residues 104–122 (KAKDERDSRRGPAGDRSYD).

The protein belongs to the bacterial ribosomal protein bS6 family.

Its function is as follows. Binds together with bS18 to 16S ribosomal RNA. The chain is Small ribosomal subunit protein bS6 from Shewanella sp. (strain ANA-3).